The primary structure comprises 140 residues: Holo-[acyl-carrier-protein] synthase (140 aa).

Mg(2+)-binding residues include Asp8 and Glu62.

It belongs to the P-Pant transferase superfamily. AcpS family. The cofactor is Mg(2+).

The protein localises to the cytoplasm. The catalysed reaction is apo-[ACP] + CoA = holo-[ACP] + adenosine 3',5'-bisphosphate + H(+). Functionally, transfers the 4'-phosphopantetheine moiety from coenzyme A to a Ser of acyl-carrier-protein. This chain is Holo-[acyl-carrier-protein] synthase, found in Cupriavidus necator (strain ATCC 17699 / DSM 428 / KCTC 22496 / NCIMB 10442 / H16 / Stanier 337) (Ralstonia eutropha).